The following is a 120-amino-acid chain: uncharacterized protein (120 aa).

This is an uncharacterized protein from Enterobacteria phage T4 (Bacteriophage T4).